The following is an 80-amino-acid chain: RNA-binding protein Hfq (80 aa).

A Sm domain is found at D10–V69.

Belongs to the Hfq family. In terms of assembly, homohexamer.

RNA chaperone that binds small regulatory RNA (sRNAs) and mRNAs to facilitate mRNA translational regulation in response to envelope stress, environmental stress and changes in metabolite concentrations. Also binds with high specificity to tRNAs. The polypeptide is RNA-binding protein Hfq (Leptothrix cholodnii (strain ATCC 51168 / LMG 8142 / SP-6) (Leptothrix discophora (strain SP-6))).